A 308-amino-acid polypeptide reads, in one-letter code: 34.2 kDa protein in rubredoxin operon (308 aa).

A disulfide bond links Cys136 and Cys139. Thr268–Asp278 lines the FAD pocket.

Belongs to the class-II pyridine nucleotide-disulfide oxidoreductase family.

In Clostridium pasteurianum, this protein is 34.2 kDa protein in rubredoxin operon.